Reading from the N-terminus, the 292-residue chain is MEMO1 family protein PF1638 (292 aa).

This sequence belongs to the MEMO1 family.

This chain is MEMO1 family protein PF1638, found in Pyrococcus furiosus (strain ATCC 43587 / DSM 3638 / JCM 8422 / Vc1).